Reading from the N-terminus, the 175-residue chain is uncharacterized protein (175 aa).

The HTH marR-type domain maps to 10 to 157 (LFELYAELIH…AERLFRDLVT (148 aa)). The segment at residues 68-91 (VTSIAEKMNTTKATVSRISTKLLG) is a DNA-binding region (H-T-H motif).

The protein resides in the cytoplasm. This is an uncharacterized protein from Bacillus subtilis (strain 168).